Here is a 160-residue protein sequence, read N- to C-terminus: Phosphopantetheine adenylyltransferase (160 aa).

Thr-9 contacts substrate. ATP contacts are provided by residues Thr-9 to Phe-10 and His-17. Substrate is bound by residues Lys-41, Leu-73, and Arg-87. ATP is bound by residues Gly-88 to Arg-90, Glu-98, and Tyr-123 to Ser-129.

Belongs to the bacterial CoaD family. In terms of assembly, homohexamer. Mg(2+) is required as a cofactor.

The protein localises to the cytoplasm. It carries out the reaction (R)-4'-phosphopantetheine + ATP + H(+) = 3'-dephospho-CoA + diphosphate. It functions in the pathway cofactor biosynthesis; coenzyme A biosynthesis; CoA from (R)-pantothenate: step 4/5. In terms of biological role, reversibly transfers an adenylyl group from ATP to 4'-phosphopantetheine, yielding dephospho-CoA (dPCoA) and pyrophosphate. The polypeptide is Phosphopantetheine adenylyltransferase (Thiobacillus denitrificans (strain ATCC 25259 / T1)).